Reading from the N-terminus, the 119-residue chain is Large ribosomal subunit protein bL19 (119 aa).

It belongs to the bacterial ribosomal protein bL19 family.

This protein is located at the 30S-50S ribosomal subunit interface and may play a role in the structure and function of the aminoacyl-tRNA binding site. This chain is Large ribosomal subunit protein bL19, found in Sulfurovum sp. (strain NBC37-1).